Consider the following 172-residue polypeptide: Bifunctional protein PyrR (172 aa).

The short motif at L90–T102 is the PRPP-binding element.

It belongs to the purine/pyrimidine phosphoribosyltransferase family. PyrR subfamily.

It catalyses the reaction UMP + diphosphate = 5-phospho-alpha-D-ribose 1-diphosphate + uracil. Functionally, regulates the transcription of the pyrimidine nucleotide (pyr) operon in response to exogenous pyrimidines. Its function is as follows. Also displays a weak uracil phosphoribosyltransferase activity which is not physiologically significant. This Pseudomonas putida (strain W619) protein is Bifunctional protein PyrR.